The primary structure comprises 141 residues: Probable mitochondrial pyruvate carrier 1 (141 aa).

The next 2 helical transmembrane spans lie at 31 to 52 (YLCSTHFWGPLSNFGIPIAAIL) and 60 to 82 (LISGRMTGALILYSSVFMRYAWM).

This sequence belongs to the mitochondrial pyruvate carrier (MPC) (TC 2.A.105) family. The functional 150 kDa pyruvate import complex is a heteromer of mpc1 and mpc2.

The protein resides in the mitochondrion. It is found in the mitochondrion inner membrane. Mediates the uptake of pyruvate into mitochondria. The chain is Probable mitochondrial pyruvate carrier 1 from Schizosaccharomyces pombe (strain 972 / ATCC 24843) (Fission yeast).